The primary structure comprises 342 residues: 4-hydroxy-2-oxovalerate aldolase 2 (342 aa).

The 253-residue stretch at 8–260 (ITVHDMTLRD…ETGVDVFKIQ (253 aa)) folds into the Pyruvate carboxyltransferase domain. 16–17 (RD) is a binding site for substrate. D17 contacts Mn(2+). H20 acts as the Proton acceptor in catalysis. S170 and H199 together coordinate substrate. Residues H199 and H201 each contribute to the Mn(2+) site. Substrate is bound at residue Y290.

It belongs to the 4-hydroxy-2-oxovalerate aldolase family.

The enzyme catalyses (S)-4-hydroxy-2-oxopentanoate = acetaldehyde + pyruvate. The polypeptide is 4-hydroxy-2-oxovalerate aldolase 2 (mhpE) (Azoarcus sp. (strain BH72)).